A 247-amino-acid polypeptide reads, in one-letter code: E3 SUMO-protein ligase NSE2 (247 aa).

M1 carries the N-acetylmethionine modification. Residues K90 and K107 each participate in a glycyl lysine isopeptide (Lys-Gly) (interchain with G-Cter in SUMO2) cross-link. S116 bears the Phosphoserine mark. Residues K125 and K130 each participate in a glycyl lysine isopeptide (Lys-Gly) (interchain with G-Cter in SUMO2) cross-link. An SP-RING-type zinc finger spans residues 154 to 240 (VDEDIIVTQS…LRRAIENHNK (87 aa)). 4 residues coordinate Zn(2+): C185, H187, C210, and C215.

It belongs to the NSE2 family. In terms of assembly, component of the SMC5-SMC6 complex which consists at least of SMC5, SMC6, NSMCE2, NSMCE1, NSMCE4A or EID3 and NSMCE3. Post-translationally, sumoylated, possibly via autosumoylation.

The protein localises to the nucleus. The protein resides in the chromosome. It is found in the telomere. It localises to the PML body. The protein operates within protein modification; protein sumoylation. E3 SUMO-protein ligase component of the SMC5-SMC6 complex, a complex involved in DNA double-strand break repair by homologous recombination. Is not be required for the stability of the complex. The complex may promote sister chromatid homologous recombination by recruiting the SMC1-SMC3 cohesin complex to double-strand breaks. The complex is required for telomere maintenance via recombination in ALT (alternative lengthening of telomeres) cell lines and mediates sumoylation of shelterin complex (telosome) components which is proposed to lead to shelterin complex disassembly in ALT-associated PML bodies (APBs). Acts as an E3 ligase mediating SUMO attachment to various proteins such as SMC6L1 and TSNAX, the shelterin complex subunits TERF1, TERF2, TINF2 and TERF2IP, RAD51AP1, and maybe the cohesin components RAD21 and STAG2. Required for recruitment of telomeres to PML nuclear bodies. SUMO protein-ligase activity is required for the prevention of DNA damage-induced apoptosis by facilitating DNA repair, and for formation of APBs in ALT cell lines. Required for sister chromatid cohesion during prometaphase and mitotic progression. In Homo sapiens (Human), this protein is E3 SUMO-protein ligase NSE2 (NSMCE2).